A 571-amino-acid chain; its full sequence is Glutamate--tRNA ligase (571 aa).

Positions 110–120 match the 'HIGH' region motif; the sequence is PNPNGPATLGS.

The protein belongs to the class-I aminoacyl-tRNA synthetase family. Glutamate--tRNA ligase type 2 subfamily.

The protein localises to the cytoplasm. It catalyses the reaction tRNA(Glu) + L-glutamate + ATP = L-glutamyl-tRNA(Glu) + AMP + diphosphate. Functionally, catalyzes the attachment of glutamate to tRNA(Glu) in a two-step reaction: glutamate is first activated by ATP to form Glu-AMP and then transferred to the acceptor end of tRNA(Glu). This is Glutamate--tRNA ligase from Methanosarcina mazei (strain ATCC BAA-159 / DSM 3647 / Goe1 / Go1 / JCM 11833 / OCM 88) (Methanosarcina frisia).